The sequence spans 134 residues: Small ribosomal subunit protein uS11 (134 aa).

The tract at residues 114 to 134 (SISDVTPQPHNGCRPPKRRRV) is disordered.

This sequence belongs to the universal ribosomal protein uS11 family. In terms of assembly, part of the 30S ribosomal subunit. Interacts with proteins S7 and S18. Binds to IF-3.

Functionally, located on the platform of the 30S subunit, it bridges several disparate RNA helices of the 16S rRNA. Forms part of the Shine-Dalgarno cleft in the 70S ribosome. This is Small ribosomal subunit protein uS11 from Corynebacterium efficiens (strain DSM 44549 / YS-314 / AJ 12310 / JCM 11189 / NBRC 100395).